The primary structure comprises 492 residues: Probable endopolygalacturonase D (492 aa).

The N-terminal stretch at 1–16 is a signal peptide; that stretch reads MKRSALILSFLPLVFG. Cys151 and Cys166 are oxidised to a cystine. 4 PbH1 repeats span residues 216–238, 258–280, 281–319, and 320–341; these read GTSV…AYWD, MYNS…EIES, TEHL…DIKE, and SSYF…AVTS. Asn292 carries N-linked (GlcNAc...) asparagine glycosylation. Asp334 functions as the Proton donor in the catalytic mechanism. Cysteines 336 and 352 form a disulfide. The active site involves His356. 3 PbH1 repeats span residues 371–392, 400–422, and 434–478; these read VNGV…RIKT, VYNI…DVQQ, and TNGV…SITG. Residues Asn407 and Asn441 are each glycosylated (N-linked (GlcNAc...) asparagine). 2 disulfide bridges follow: Cys461–Cys466 and Cys484–Cys491.

The protein belongs to the glycosyl hydrolase 28 family.

Its subcellular location is the secreted. It catalyses the reaction (1,4-alpha-D-galacturonosyl)n+m + H2O = (1,4-alpha-D-galacturonosyl)n + (1,4-alpha-D-galacturonosyl)m.. In terms of biological role, involved in maceration and soft-rotting of plant tissue. Hydrolyzes the 1,4-alpha glycosidic bonds of de-esterified pectate in the smooth region of the plant cell wall. This chain is Probable endopolygalacturonase D (pgaD), found in Aspergillus flavus (strain ATCC 200026 / FGSC A1120 / IAM 13836 / NRRL 3357 / JCM 12722 / SRRC 167).